The chain runs to 740 residues: Elongation factor 2 (740 aa).

A tr-type G domain is found at 18 to 263 (EQVRNIGIIA…MVVRWVPNPR (246 aa)). Residues 27 to 34 (AHVDHGKT), 93 to 97 (DTPGH), and 147 to 150 (NKVD) each bind GTP. Position 606 is a diphthamide (His-606).

This sequence belongs to the TRAFAC class translation factor GTPase superfamily. Classic translation factor GTPase family. EF-G/EF-2 subfamily.

Its subcellular location is the cytoplasm. Its function is as follows. Catalyzes the GTP-dependent ribosomal translocation step during translation elongation. During this step, the ribosome changes from the pre-translocational (PRE) to the post-translocational (POST) state as the newly formed A-site-bound peptidyl-tRNA and P-site-bound deacylated tRNA move to the P and E sites, respectively. Catalyzes the coordinated movement of the two tRNA molecules, the mRNA and conformational changes in the ribosome. In Ignicoccus hospitalis (strain KIN4/I / DSM 18386 / JCM 14125), this protein is Elongation factor 2.